A 369-amino-acid polypeptide reads, in one-letter code: MQFDLLKTDGVARRGTLTLAHGVIQTPVFMPVGTYGTVKAMTPQSLNDIGAQICLGNTFHLWLRPGLEVIAAHKGLHDFMNWQKPILTDSGGFQVFSLGAMRKITEEGVKFSSPHDGAKLFLTPEISMQIQKVLNSDIVMIFDECTPYPATHEEAAKSMRMSMRWAQRSRDEHNKLENSNALFGIVQGGMHEDLRDESVAGLCDIGFDGMAIGGLSVGEPKEDMARILAHTAPQLPTHKPRYLMGVGTPEDLVYSVSAGIDMFDCVMPTRNARNGHLFTRFGDVKIKNARYKLDTGPLDSSCSCYTCTNFTRAYLHHLFRNGEILGGMLNTIHNLHFYQTIMAEMRTAIEVEHFTEWAAGFARDRSSGQ.

The Proton acceptor role is filled by aspartate 89. Residues 89-93, aspartate 143, glutamine 187, and glycine 214 each bind substrate; that span reads DSGGF. The RNA binding stretch occupies residues 245 to 251; the sequence is GVGTPED. Residue aspartate 264 is the Nucleophile of the active site. Positions 269-273 are RNA binding; important for wobble base 34 recognition; sequence TRNAR. Cysteine 302, cysteine 304, cysteine 307, and histidine 333 together coordinate Zn(2+).

The protein belongs to the queuine tRNA-ribosyltransferase family. As to quaternary structure, homodimer. Within each dimer, one monomer is responsible for RNA recognition and catalysis, while the other monomer binds to the replacement base PreQ1. Zn(2+) serves as cofactor.

It carries out the reaction 7-aminomethyl-7-carbaguanine + guanosine(34) in tRNA = 7-aminomethyl-7-carbaguanosine(34) in tRNA + guanine. It participates in tRNA modification; tRNA-queuosine biosynthesis. Its function is as follows. Catalyzes the base-exchange of a guanine (G) residue with the queuine precursor 7-aminomethyl-7-deazaguanine (PreQ1) at position 34 (anticodon wobble position) in tRNAs with GU(N) anticodons (tRNA-Asp, -Asn, -His and -Tyr). Catalysis occurs through a double-displacement mechanism. The nucleophile active site attacks the C1' of nucleotide 34 to detach the guanine base from the RNA, forming a covalent enzyme-RNA intermediate. The proton acceptor active site deprotonates the incoming PreQ1, allowing a nucleophilic attack on the C1' of the ribose to form the product. After dissociation, two additional enzymatic reactions on the tRNA convert PreQ1 to queuine (Q), resulting in the hypermodified nucleoside queuosine (7-(((4,5-cis-dihydroxy-2-cyclopenten-1-yl)amino)methyl)-7-deazaguanosine). The chain is Queuine tRNA-ribosyltransferase from Dechloromonas aromatica (strain RCB).